Consider the following 208-residue polypeptide: Outer-membrane lipoprotein carrier protein (208 aa).

An N-terminal signal peptide occupies residues 1–25; that stretch reads MKKLFSAKLFSALVLSFSLFSTAHA.

The protein belongs to the LolA family. Monomer.

Its subcellular location is the periplasm. Functionally, participates in the translocation of lipoproteins from the inner membrane to the outer membrane. Only forms a complex with a lipoprotein if the residue after the N-terminal Cys is not an aspartate (The Asp acts as a targeting signal to indicate that the lipoprotein should stay in the inner membrane). This is Outer-membrane lipoprotein carrier protein from Vibrio campbellii (strain ATCC BAA-1116).